Consider the following 524-residue polypeptide: Pentatricopeptide repeat-containing protein At1g02150 (524 aa).

PPR repeat units follow at residues 168 to 202 (DRRV…GYAL), 203 to 237 (HPLP…DIRL), 238 to 268 (DIYS…MKSD), 274 to 304 (NWTT…VEAR), 309 to 339 (NRIP…YKSV), 344 to 378 (PNLG…KSSY), and 379 to 413 (DPRI…GGKP).

The protein belongs to the PPR family. P subfamily.

This Arabidopsis thaliana (Mouse-ear cress) protein is Pentatricopeptide repeat-containing protein At1g02150.